The primary structure comprises 1469 residues: ABC transporter G family member 36 (1469 aa).

Position 1 is an N-acetylmethionine (M1). Phosphoserine is present on residues S37, S38, and S40. T43 bears the Phosphothreonine mark. The residue at position 45 (S45) is a Phosphoserine. Residues 171-444 (LGMIGIQFAK…FESFGFKCPE (274 aa)) enclose the ABC transporter 1 domain. 204–211 (GPPSSGKT) lines the ATP pocket. The ABC transmembrane type-2 1 domain occupies 522–735 (ELLKSCWDKE…AFNGLVVNEM (214 aa)). 7 helical membrane passes run 540–560 (FFYV…STLF), 575–595 (LYIG…FAEM), 621–641 (LPTF…WMVV), 659–679 (FLLV…IASV), 685–705 (IANT…GFLL), 713–733 (WWGW…LVVN), and 772–792 (ISVG…TLAL). Positions 806-852 (PEEENEDADQGKDPMRRSLSTADGNRRGEVAMGRMSRDSAAEASGGA) are disordered. 3 positions are modified to phosphoserine: S825, S841, and S844. Residues 829 to 845 (GNRRGEVAMGRMSRDSA) show a composition bias toward basic and acidic residues. The 253-residue stretch at 867–1119 (MSFDDVKYFV…KVVEYFESFP (253 aa)) folds into the ABC transporter 2 domain. 912 to 919 (GVSGAGKT) lines the ATP pocket. In terms of domain architecture, ABC transmembrane type-2 2 spans 1192 to 1406 (GQFKSCLWKQ…TVYGLIVSQY (215 aa)). Helical transmembrane passes span 1216 to 1236 (FIFT…IGGN), 1239 to 1259 (NAGD…FVGI), 1299 to 1319 (LPYV…MVGF), 1326 to 1346 (FFWF…YGMM), 1356 to 1376 (VASI…GFFI), 1384 to 1404 (WWIW…LIVS), and 1441 to 1461 (PVAA…AFCI).

Belongs to the ABC transporter superfamily. ABCG family. PDR (TC 3.A.1.205) subfamily. In terms of assembly, interacts, in a Ca(2+)-dependent manner, with calmodulins CaM3, CaM7 and several CaM-like proteins (CML8, CML9, CML12/CAL4, CML37 and CML38), as well as with calcium regulated proteins CBL4/SOS3 and KIC. Phosphorylated upon perception of pathogen-associated molecular patterns (PAMPs); phosphorylations at Ser-40 and Ser-45, which likely regulate transport activity, are required for plant defense against pathogens (e.g. Blumeria graminis), but dispensable for recruitment to the host-pathogen interface and penetration sites. Phosphorylation at Ser-841 seems to be required for protein stability. Ubiquitous (at protein level). Higher levels in root hairs, stomata, epidermal cells, and hydathodes. Concentrated at the infection site of infected plants, including papillae and haustoria. Accumulates at the periphery of lateral root cap and root epidermal cells, especially in the outer lateral membrane domain facing the environment.

It is found in the cell membrane. It localises to the golgi apparatus. Its subcellular location is the trans-Golgi network membrane. The protein localises to the endoplasmic reticulum membrane. Together with ABCG37, regulates auxin homeostasis and responses by playing a dual role in coumarin (e.g. esculin) and in the auxin precursor indole 3-butyric acid (IBA) efflux transport, thus influencing cotyledons, roots and root hairs development. Mediates the transport (export into the apoplast) of distinct indole-type metabolites in distinct biological processes; a precursor of 4-O-beta-D-glucosyl-indol-3-yl formamide (4OGlcI3F), a pathogen-inducible tryptophan-derived compound (e.g. upon Blumeria graminis conidiospore inoculation), being a probable substrate in extracellular pathogen defense. Involved in the cellular detoxification of xenobiotics by promoting the excretion of some auxinic herbicides including 4-(2,4-dichlorophenoxy)butyric acid (2,4-DB) and other members of the phenoxyalkanoic acid family but not 2,4-dichlorophenoxyacetic acid (2,4-D). Mediates thymidine exudation in the rhizosphere. May be a transporter of lignin precursors during tracheary element differentiation. Key factor that controls the extent of cell death in the defense response. Necessary for both callose deposition and glucosinolate activation in response to pathogens. As a central component of nonhost resistance (NHR), required for limiting invasion by nonadapted pathogens including powdery mildews (e.g. Blumeria graminis and Erysiphe pisi), root-penetrating pathogenic fungi (e.g. Fusarium oxysporum), Phakopsora pachyrhizi and Colletotrichum gloeosporioides (anthracnose fungi), probably by sensing Ca(2+) via interactions with calmodulins (e.g. CaM7). Confers resistance to cadmium (Cd) and lead (Pb), probably as an efflux pump of Cd2+ or Cd conjugates, and possibly, of chemicals that mediate pathogen resistance. Promotes resistance to abiotic stresses (e.g. drought and salt stress) and favors general growth by preventing sodium accumulation in plants. Required for microbe-associated molecular patterns (MAMPs)- and salicylic acid (SA)-dependent hypersensitive cell death (HR), involving indole glucosinolate breakdown products (e.g. indole-3-acetonitrile), probably in a PEN2 myrosinase-dependent metabolic pathway, triggered by the recognition of effectors from incompatible pathogens including oomycetes and bacteria (e.g. AvrRpm1 and AvrRps4) and benzothiadiazole- (BTH), and leading to an induced protection against pathogens (e.g. Pseudomonas syringae pv. tomato DC3000, Golovinomyces orontii and Hyaloperonospora arabidopsidis). The sequence is that of ABC transporter G family member 36 from Arabidopsis thaliana (Mouse-ear cress).